A 248-amino-acid polypeptide reads, in one-letter code: Protein GrpE (248 aa).

The tract at residues 229–248 is disordered; it reads AAPKEDTLPAQENQSSPADS. Over residues 238–248 the composition is skewed to polar residues; the sequence is AQENQSSPADS.

The protein belongs to the GrpE family. As to quaternary structure, homodimer.

It is found in the cytoplasm. Its function is as follows. Participates actively in the response to hyperosmotic and heat shock by preventing the aggregation of stress-denatured proteins, in association with DnaK and GrpE. It is the nucleotide exchange factor for DnaK and may function as a thermosensor. Unfolded proteins bind initially to DnaJ; upon interaction with the DnaJ-bound protein, DnaK hydrolyzes its bound ATP, resulting in the formation of a stable complex. GrpE releases ADP from DnaK; ATP binding to DnaK triggers the release of the substrate protein, thus completing the reaction cycle. Several rounds of ATP-dependent interactions between DnaJ, DnaK and GrpE are required for fully efficient folding. This chain is Protein GrpE, found in Trichormus variabilis (strain ATCC 29413 / PCC 7937) (Anabaena variabilis).